The following is a 328-amino-acid chain: Aspartate carbamoyltransferase catalytic subunit (328 aa).

Carbamoyl phosphate-binding residues include R55 and T56. K83 is an L-aspartate binding site. Residues R105, H135, and Q138 each contribute to the carbamoyl phosphate site. L-aspartate-binding residues include R176 and R230. 2 residues coordinate carbamoyl phosphate: G271 and P272.

Belongs to the aspartate/ornithine carbamoyltransferase superfamily. ATCase family. As to quaternary structure, heterododecamer (2C3:3R2) of six catalytic PyrB chains organized as two trimers (C3), and six regulatory PyrI chains organized as three dimers (R2).

It carries out the reaction carbamoyl phosphate + L-aspartate = N-carbamoyl-L-aspartate + phosphate + H(+). It functions in the pathway pyrimidine metabolism; UMP biosynthesis via de novo pathway; (S)-dihydroorotate from bicarbonate: step 2/3. In terms of biological role, catalyzes the condensation of carbamoyl phosphate and aspartate to form carbamoyl aspartate and inorganic phosphate, the committed step in the de novo pyrimidine nucleotide biosynthesis pathway. This chain is Aspartate carbamoyltransferase catalytic subunit, found in Streptomyces griseus subsp. griseus (strain JCM 4626 / CBS 651.72 / NBRC 13350 / KCC S-0626 / ISP 5235).